The sequence spans 1434 residues: MPKSDDCFFSMDNLFFSSPDETENFPVKEKSLDWFLPPAPLISEIPDIQELEEEIESYKLLGKGKMPRMLTSNLKIINEDTNCISPTQKIHFSYNVHEQDYLNLGGSNNNDMSHVAGKLMYGSSQKYKNHMGAKSPSARSSPGDTKLHDVAEDRQGTSAFKKRLSRTCDSEHDCDYADGSLNLSSHISPVKLTQTKISKENAWTCSNSKQKRQYSTNKFKANDAFSASGIGKDIFKAPSFPAASQPHDIQGITPNGLGSLKAVTEIPAKFRNIFKEFPYFNYIQSKAFDDLLYTDRNFVICAPTGSGKTVVFELAITRLLMEVPLPWLNMKIVYMAPIKALCSQRFDDWKEKFGPVGLNCKELTGDTVMDDLFEIQHANIIITTPEKWDSVTRKWRDNSFIQLVRLFLIDEVHVIKDENRGPTLEVVVSRMKTVQSLSRDLESASPVPVRFVAVSATIPNAEDIAEWLSDGERPAVCLKMDESHRPVKLQKVVLGFPCSSSQTEFKFDLALNYKVYSVIRTYSDQKPTLVFCSTRKGVQQAASVLVKDAKFIISVEQKLRLQKSAYSIRDSKLKDTLVYGVGYHHAGMELSDRKLVEGLFTSGDLPVLFTTSTLAMGMNMPAHLVVIKSTMHYSGGVFEEYSETDILQMIGRAGRPQFDTTATAVIMTRLSTREKYVQMLACNDTVESSLHRHLIEHLNAEIVLHTITDVNIALDWIRSTMLYIRALKNPSHYGFSSGLNKDGIEAKLQELCLKNLKDLSSLDLIKMDEDVNFKPTEAGRLMAWYYITFETVKKFCAISGKETLLDLISMISSCNEFLDVQLRISEKRILNTLNKDPNRITIRFPMAERIKTREMKVNCLIQAQLGCIPIQDFALTQDTVKIFRNGSRIARWLSDFVAAQEKKFAVLLNSVILTKCFKCKLWENSKHVSKQLDKIGISLSNTMVNAGLTSFKKIEEANARELELILNRHPPFGTQIKEAVAHLPKYELEVEQIARYSDIKAEILVTIILRNFEQLQTKRTAPDFHYATLIIGDADNQVVFKHKIMDSVLLKSGNWVKKIDVKRALISEDLSINLISSDYVGLDIHQKFTVFYFGPRKFVNETAMERSSETDISHSDYSGRATATGSSKGMATCKKPGNRECHHHCKNKHACGHDCCKIGVAQKPEVKESAMSSYLSDLKSRDAVSSLPLAKRLKIQMNKSQNVDLKEFGFTPRPSLSSISRSEYLNTPELSILEQRNQHEIYGKVQQGPSEYRDKEVLGVNLELGNEVWDDFDDESLIEVMSLSADAEKMAASGFGDTRDSSLGGSKLPFQKSSSRFQRDNSNSFASSPGKPDAYLRDCSRSSFGLSSVAEIPQRAENASLANLQERRPLTLSPVIERMCFAHSKKTPQSPKFKEVDIFIGNSGSKKEIDLSKYYPDDAAEEMKALLGIFNGIF.

Positions 289-476 (DDLLYTDRNF…WLSDGERPAV (188 aa)) constitute a Helicase ATP-binding domain. An ATP-binding site is contributed by 302 to 309 (APTGSGKT). Residues 410–413 (DEVH) carry the DEAH box motif. The 205-residue stretch at 514–718 (KVYSVIRTYS…DVNIALDWIR (205 aa)) folds into the Helicase C-terminal domain. The region spanning 775–1089 (PTEAGRLMAW…VGLDIHQKFT (315 aa)) is the SEC63 domain. The segment at 1110–1130 (TDISHSDYSGRATATGSSKGM) is disordered. The C4-type zinc-finger motif lies at 1141-1156 (CHHHCKNKHACGHDCC). A disordered region spans residues 1294-1333 (GFGDTRDSSLGGSKLPFQKSSSRFQRDNSNSFASSPGKPD). The span at 1311 to 1327 (QKSSSRFQRDNSNSFAS) shows a compositional bias: polar residues.

It belongs to the helicase family. SKI2 subfamily. Zn(2+) is required as a cofactor.

It carries out the reaction Couples ATP hydrolysis with the unwinding of duplex DNA by translocating in the 3'-5' direction.. The catalysed reaction is ATP + H2O = ADP + phosphate + H(+). Its function is as follows. Required for crossover formation and complete synapsis of homologous chromosomes during meiosis. The protein is Probable ATP-dependent DNA helicase HFM1 of Mus musculus (Mouse).